Consider the following 307-residue polypeptide: Glycerol-3-phosphate dehydrogenase [NAD(P)+] (307 aa).

Residues Phe-11, Arg-31, and Lys-95 each contribute to the NADPH site. Residues Lys-95, Gly-121, and Ser-123 each coordinate sn-glycerol 3-phosphate. Ala-125 is a binding site for NADPH. Sn-glycerol 3-phosphate contacts are provided by Lys-176, Asp-229, Ser-239, Arg-240, and Asn-241. Lys-176 acts as the Proton acceptor in catalysis. Arg-240 lines the NADPH pocket. Glu-261 serves as a coordination point for NADPH.

Belongs to the NAD-dependent glycerol-3-phosphate dehydrogenase family.

Its subcellular location is the cytoplasm. The enzyme catalyses sn-glycerol 3-phosphate + NAD(+) = dihydroxyacetone phosphate + NADH + H(+). The catalysed reaction is sn-glycerol 3-phosphate + NADP(+) = dihydroxyacetone phosphate + NADPH + H(+). Its pathway is membrane lipid metabolism; glycerophospholipid metabolism. Its function is as follows. Catalyzes the reduction of the glycolytic intermediate dihydroxyacetone phosphate (DHAP) to sn-glycerol 3-phosphate (G3P), the key precursor for phospholipid synthesis. This is Glycerol-3-phosphate dehydrogenase [NAD(P)+] from Jannaschia sp. (strain CCS1).